The primary structure comprises 392 residues: Chorismate synthase (392 aa).

NADP(+)-binding residues include Arg-39 and Arg-45. FMN is bound by residues 128 to 130, 248 to 249, Gly-300, 315 to 319, and Arg-341; these read RSS, QA, and KPIPT.

The protein belongs to the chorismate synthase family. Homotetramer. FMNH2 is required as a cofactor.

The enzyme catalyses 5-O-(1-carboxyvinyl)-3-phosphoshikimate = chorismate + phosphate. Its pathway is metabolic intermediate biosynthesis; chorismate biosynthesis; chorismate from D-erythrose 4-phosphate and phosphoenolpyruvate: step 7/7. Its function is as follows. Catalyzes the anti-1,4-elimination of the C-3 phosphate and the C-6 proR hydrogen from 5-enolpyruvylshikimate-3-phosphate (EPSP) to yield chorismate, which is the branch point compound that serves as the starting substrate for the three terminal pathways of aromatic amino acid biosynthesis. This reaction introduces a second double bond into the aromatic ring system. This Trichlorobacter lovleyi (strain ATCC BAA-1151 / DSM 17278 / SZ) (Geobacter lovleyi) protein is Chorismate synthase.